The primary structure comprises 489 residues: RNA polymerase II subunit 5-mediating protein homolog (489 aa).

4 disordered regions span residues 141–188, 200–329, 396–415, and 434–489; these read NSDE…MDEE, EEKE…EEDE, ILKT…SYNE, and FENQ…RQNK. Over residues 157-168 the composition is skewed to low complexity; that stretch reads QKSTTTTTTTTT. Basic and acidic residues-rich tracts occupy residues 169–188 and 215–224; these read SKDK…MDEE and FNKKFNKKLD. Acidic residues-rich tracts occupy residues 227-265, 276-298, and 315-329; these read GSDE…EDEK, EEDD…EYYD, and QGDD…EEDE. Residues 396-413 show a composition bias toward polar residues; it reads ILKTNSSGNLMSTIPKSY. Positions 480–489 are enriched in basic residues; sequence SRFKSSRQNK.

The protein belongs to the RNA polymerase II subunit 5-mediating protein family.

Its subcellular location is the nucleus. This chain is RNA polymerase II subunit 5-mediating protein homolog (rmp), found in Dictyostelium discoideum (Social amoeba).